A 1049-amino-acid polypeptide reads, in one-letter code: FERM, ARHGEF and pleckstrin domain-containing protein 1 (1049 aa).

The disordered stretch occupies residues 1–37 (MGEIEQKPTPASRLGAPENSGISTLERGQKPPPTPSG). Residues S20 and S23 each carry the phosphoserine modification. Position 24 is a phosphothreonine (T24). Positions 40-320 (MTVKIQMLDD…EHHAFFRLFE (281 aa)) constitute an FERM domain. Phosphoserine is present on residues S340, S373, S389, S403, S427, S433, and S437. Residues 361–537 (FERKHSKIHS…TDDEEEGRRK (177 aa)) form a disordered region. Polar residues-rich tracts occupy residues 371 to 395 (TRSLVSQPTAPNSEVPKQSPQSASL) and 402 to 412 (ESPSAQSCQQA). Residues 435–448 (SGSKAADGTAAAAP) are compositionally biased toward low complexity. Composition is skewed to polar residues over residues 473-492 (STGSLTGSPHLSELSINSQG) and 499-514 (VTLSPNLSPDNKQASP). Phosphoserine occurs at positions 513 and 517. The 192-residue stretch at 543 to 734 (KAYYIAKEVS…TEMVAQLHGT (192 aa)) folds into the DH domain. Positions 763 to 860 (EFIRLGSLSK…WLEDIQMAID (98 aa)) constitute a PH 1 domain. 3 positions are modified to phosphoserine: S837, S876, and S882. The interval 866-908 (NGPTPELLASSPPDNKSPDEATAADQESEDDLSASRTSLERQA) is disordered. T887 bears the Phosphothreonine mark. A phosphoserine mark is found at S893, S900, and S903. A PH 2 domain is found at 936–1033 (ENQLSGNLLR…WMEVIRSATS (98 aa)).

Interacts with CADM1. Interacts with RAC1. In terms of tissue distribution, detected in forbrain (at protein level).

The protein localises to the cell membrane. It localises to the synapse. Its subcellular location is the synaptosome. The protein resides in the cytoplasm. It is found in the cytosol. The protein localises to the cell projection. It localises to the filopodium. Its subcellular location is the dendrite. The protein resides in the dendritic spine. Functionally, may play a role in semaphorin signaling. Functions as a guanine nucleotide exchange factor for RAC1. Plays a role in the assembly and disassembly of dendritic filopodia, the formation of dendritic spines, regulation of dendrite length and ultimately the formation of synapses. The sequence is that of FERM, ARHGEF and pleckstrin domain-containing protein 1 (Farp1) from Rattus norvegicus (Rat).